A 436-amino-acid polypeptide reads, in one-letter code: Two-pore potassium channel 3 (436 aa).

Residues 1–148 are Cytoplasmic-facing; the sequence is MANEGSDPLL…QKDPTETSRS (148 aa). The disordered stretch occupies residues 62 to 117; the sequence is SHFIDSMKQPSPSSSSTAVNNPFSDSSTLDPLLPPPPPQPEPWLSDQTSSHCQGHA. A compositionally biased stretch (low complexity) spans 71–92; the sequence is PSPSSSSTAVNNPFSDSSTLDP. Residues 93-102 are compositionally biased toward pro residues; it reads LLPPPPPQPE. A helical transmembrane segment spans residues 149–169; that stretch reads VVRQAFALLVVYLSLGVLIYW. Residues 185–204 constitute an intramembrane region (pore-forming); that stretch reads DGLYFCIVTMCTIGYGDITP. Residues 212-232 traverse the membrane as a helical segment; that stretch reads FSIMFVLVGFGFIDILLSGMV. At 233–274 the chain is on the cytoplasmic side; sequence SYVLDLQESYMLDSAKRRDEPEKRRSYIIDVKKGRMRIRLKV. The helical transmembrane segment at 275-295 threads the bilayer; it reads ALALGVVVLCIAVGVGIMHFI. Positions 302 to 321 form an intramembrane region, pore-forming; that stretch reads DSFYLSVMSVTTVGYGDRAF. A helical transmembrane segment spans residues 328–348; the sequence is LFAAIWLLVSTLAVARAFLYL. Over 349–436 the chain is Cytoplasmic; it reads AEARVDKRNR…LDLLEGGSGD (88 aa). 2 consecutive EF-hand domains span residues 365–400 and 404–436; these read LCETMSVSQFFAADIDNNGCVSKAEYVIYKLKEMEK and KDILPISKQFDKLDRCSNGKITLLDLLEGGSGD. 9 residues coordinate Ca(2+): aspartate 378, aspartate 380, asparagine 382, cysteine 384, glutamate 389, aspartate 417, asparagine 421, lysine 423, and aspartate 428.

It belongs to the two pore domain potassium channel (TC 1.A.1.7) family. In terms of assembly, homodimer. Expressed in roots, cotyledons, stems, hypocotyls, leaves and flowers. Detected in root tips and in mesophyll cells and guard cells of the leaves.

The protein resides in the vacuole membrane. It is found in the plastid. It localises to the chloroplast thylakoid membrane. Its activity is regulated as follows. Inhibited by barium, but not by tetraethylammonium. In terms of biological role, two-pore potassium channel modulating the proton motive force (pmf) necessary to convert photochemical energy into physiological functions. Mediates the potassium efflux from the thylakoid lumen required for the regulation of the transmembrane electrical potential, the enhancement of the pH gradient for ATP synthesis, the regulation of electron flow, and pH-mediated photoprotective responses. Requires calcium for channel activity. This is Two-pore potassium channel 3 from Arabidopsis thaliana (Mouse-ear cress).